The primary structure comprises 308 residues: tRNA pseudouridine synthase B (308 aa).

The active-site Nucleophile is the aspartate 47.

Belongs to the pseudouridine synthase TruB family. Type 1 subfamily.

It catalyses the reaction uridine(55) in tRNA = pseudouridine(55) in tRNA. In terms of biological role, responsible for synthesis of pseudouridine from uracil-55 in the psi GC loop of transfer RNAs. The protein is tRNA pseudouridine synthase B of Xanthomonas oryzae pv. oryzae (strain MAFF 311018).